The following is an 88-amino-acid chain: Small ribosomal subunit protein bS20 (88 aa).

This sequence belongs to the bacterial ribosomal protein bS20 family.

Its function is as follows. Binds directly to 16S ribosomal RNA. This Clostridium botulinum (strain ATCC 19397 / Type A) protein is Small ribosomal subunit protein bS20.